We begin with the raw amino-acid sequence, 177 residues long: MKFFTDLLPVLLFFGAYWLTRDMFVATGVAIAATAVMVAWAWFKHRKVDTMQWISLGLIVVLGGATLLLHDKHFIMWKPTVLYWVMGAGLLISEFAGKNGLRLMMGKQIEMPDPVWRKLTWAWSGFFAFMGALNLFVAYHFSEDVWVNFKLFGGMGLMLLFVIAQSLFLAKYIEEKK.

5 helical membrane passes run 23–43, 50–70, 73–93, 119–139, and 149–169; these read MFVA…WAWF, TMQW…LLLH, HFIM…LLIS, LTWA…FVAY, and FKLF…SLFL.

Belongs to the YciB family.

Its subcellular location is the cell inner membrane. In terms of biological role, plays a role in cell envelope biogenesis, maintenance of cell envelope integrity and membrane homeostasis. This Chromobacterium violaceum (strain ATCC 12472 / DSM 30191 / JCM 1249 / CCUG 213 / NBRC 12614 / NCIMB 9131 / NCTC 9757 / MK) protein is Inner membrane-spanning protein YciB.